We begin with the raw amino-acid sequence, 349 residues long: GDP-mannose:glycolipid 4-beta-D-mannosyltransferase (349 aa).

An N-terminal signal peptide occupies residues 1–14 (MSASASLPVTRAAA).

Belongs to the glycosyltransferase 94 family.

The protein localises to the cell inner membrane. The catalysed reaction is beta-D-GlcA-(1-&gt;2)-alpha-D-Man-(1-&gt;3)-beta-D-Glc-(1-&gt;4)-alpha-D-Glc-di-trans,octa-cis-undecaprenyl diphosphate + GDP-alpha-D-mannose = beta-D-Man-(1-&gt;4)-beta-D-GlcA-(1-&gt;2)-alpha-D-Man-(1-&gt;3)-beta-D-Glc-(1-&gt;4)-alpha-D-Glc-di-trans,octa-cis-undecaprenyl diphosphate + GDP + H(+). It participates in glycan biosynthesis; xanthan biosynthesis. In terms of biological role, nonprocessive beta-mannosyltransferase that catalyzes the transfer of a mannose residue from GDP-mannose to glucuronic acid-beta-1,2-mannose-alpha-1,3-glucose-beta-1,4-glucose-PP-polyisoprenyl to form the lipid-linked pentasaccharide repeating unit of xanthan, Man-GlcA-Man-Glc(2)-PP-Pol. Is involved in the biosynthesis of the exopolysaccharide xanthan. To a lesser extent, can also use ADP-Man and even GDP-Glc as sugar donor substrates in vitro. Is unable to transfer a Man residue to the free-tetrasaccharide GlcA-Man-Glc(2) used as an acceptor, which indicates that the diphosphate group and the lipid moiety in the acceptor substrate are of major importance for acceptor binding and catalysis. The polypeptide is GDP-mannose:glycolipid 4-beta-D-mannosyltransferase (gumI) (Xanthomonas campestris pv. campestris).